The primary structure comprises 199 residues: Protein GrpE (199 aa).

Residues 1-27 (MSEQNTNHESPEQNVAHDNIEHSDSIL) are disordered. The span at 18–27 (DNIEHSDSIL) shows a compositional bias: basic and acidic residues.

This sequence belongs to the GrpE family. In terms of assembly, homodimer.

It localises to the cytoplasm. Functionally, participates actively in the response to hyperosmotic and heat shock by preventing the aggregation of stress-denatured proteins, in association with DnaK and GrpE. It is the nucleotide exchange factor for DnaK and may function as a thermosensor. Unfolded proteins bind initially to DnaJ; upon interaction with the DnaJ-bound protein, DnaK hydrolyzes its bound ATP, resulting in the formation of a stable complex. GrpE releases ADP from DnaK; ATP binding to DnaK triggers the release of the substrate protein, thus completing the reaction cycle. Several rounds of ATP-dependent interactions between DnaJ, DnaK and GrpE are required for fully efficient folding. The chain is Protein GrpE from Psychrobacter sp. (strain St1).